A 306-amino-acid chain; its full sequence is Homoserine O-acetyltransferase (306 aa).

The active-site Acyl-thioester intermediate is the cysteine 142. Substrate contacts are provided by lysine 163 and serine 192. The active-site Proton acceptor is histidine 235. The active site involves glutamate 237. Arginine 249 lines the substrate pocket.

This sequence belongs to the MetA family.

It localises to the cytoplasm. It carries out the reaction L-homoserine + acetyl-CoA = O-acetyl-L-homoserine + CoA. Its pathway is amino-acid biosynthesis; L-methionine biosynthesis via de novo pathway; O-acetyl-L-homoserine from L-homoserine: step 1/1. Functionally, transfers an acetyl group from acetyl-CoA to L-homoserine, forming acetyl-L-homoserine. This Brucella melitensis biotype 1 (strain ATCC 23456 / CCUG 17765 / NCTC 10094 / 16M) protein is Homoserine O-acetyltransferase.